The sequence spans 319 residues: MKRIGVLTSGGDSPGMNAAIRAVVRKAIFHGLEVYGISYGYQGLINGDIKKMELGSVGDIIHRGGTMLYTARCEEFKTLEGQQKGIEQLKKFGIEGLVVIGGDGSYRGAQQLTKHGFPTIGVPGTIDNDIPGTDFTIGFDTALNTVIDAIDKIRDTATSHDRTYVIEVMGRHAGDLALWAGLADGAETIVIPEAEHNMEQILATIKRGQERGKKHSIIVVAEGVGSGIEFGDRISKEMNMETRVTVLGHIQRGGSPTGADRVLASRLGAKAVDLLLEGKAGMTVGIQKNELVYHPIDEILDRPHTIDQEMYKLSQELSI.

Residue G11 coordinates ATP. Residue 21-25 (RAVVR) participates in ADP binding. Residues 72–73 (RC) and 102–105 (GDGS) each bind ATP. Mg(2+) is bound at residue D103. 125 to 127 (TID) serves as a coordination point for substrate. D127 acts as the Proton acceptor in catalysis. R154 is a binding site for ADP. Substrate contacts are provided by residues R162 and 169–171 (MGR). Residues 185 to 187 (GAE), R211, and 213 to 215 (KKH) contribute to the ADP site. Residues E222, R243, and 249 to 252 (HIQR) each bind substrate.

This sequence belongs to the phosphofructokinase type A (PFKA) family. ATP-dependent PFK group I subfamily. Prokaryotic clade 'B1' sub-subfamily. In terms of assembly, homotetramer. It depends on Mg(2+) as a cofactor.

It localises to the cytoplasm. It carries out the reaction beta-D-fructose 6-phosphate + ATP = beta-D-fructose 1,6-bisphosphate + ADP + H(+). The protein operates within carbohydrate degradation; glycolysis; D-glyceraldehyde 3-phosphate and glycerone phosphate from D-glucose: step 3/4. With respect to regulation, allosterically activated by ADP and other diphosphonucleosides, and allosterically inhibited by phosphoenolpyruvate. In terms of biological role, catalyzes the phosphorylation of D-fructose 6-phosphate to fructose 1,6-bisphosphate by ATP, the first committing step of glycolysis. The protein is ATP-dependent 6-phosphofructokinase of Shouchella clausii (strain KSM-K16) (Alkalihalobacillus clausii).